A 464-amino-acid chain; its full sequence is Tail tube protein pb6 (464 aa).

A disordered region spans residues 40–59 (SNSTDITVNEAGPRPTRGSK). Residues 375–453 (AVTAITVKSA…ATAKDGSGVK (79 aa)) enclose the BIG2 domain.

Homotrimer. The tail tube is made of 40 stacked trimeric rings. Interacts with baseplate tube protein p140.

The protein localises to the virion. In terms of biological role, polymerizes to form the tail tube of the phage. Tail tube protein polymerization takes place around the tape measure protein (TMP-pb2) and is probably directed by chaperone proteins. The tail tube is involved in viral genome delivery during ejection. The polypeptide is Tail tube protein pb6 (Escherichia coli (Enterobacteria phage T5)).